A 206-amino-acid polypeptide reads, in one-letter code: LexA repressor (206 aa).

Positions 28-48 (RAEIARRLGFKSANAAEEHLK) form a DNA-binding region, H-T-H motif. Residues Ser123 and Lys160 each act as for autocatalytic cleavage activity in the active site.

The protein belongs to the peptidase S24 family. Homodimer.

The catalysed reaction is Hydrolysis of Ala-|-Gly bond in repressor LexA.. In terms of biological role, represses a number of genes involved in the response to DNA damage (SOS response), including recA and lexA. In the presence of single-stranded DNA, RecA interacts with LexA causing an autocatalytic cleavage which disrupts the DNA-binding part of LexA, leading to derepression of the SOS regulon and eventually DNA repair. This chain is LexA repressor, found in Shewanella halifaxensis (strain HAW-EB4).